The following is a 365-amino-acid chain: Flagellar P-ring protein (365 aa).

Positions 1–19 are cleaved as a signal peptide; that stretch reads MIKFLSALILLLVTTAAQA.

Belongs to the FlgI family. In terms of assembly, the basal body constitutes a major portion of the flagellar organelle and consists of four rings (L,P,S, and M) mounted on a central rod.

It is found in the periplasm. The protein resides in the bacterial flagellum basal body. Functionally, assembles around the rod to form the L-ring and probably protects the motor/basal body from shearing forces during rotation. In Shigella dysenteriae serotype 1 (strain Sd197), this protein is Flagellar P-ring protein.